The following is a 196-amino-acid chain: Large ribosomal subunit protein eL15 (196 aa).

The interval 159 to 196 is disordered; the sequence is RAYRGRTSAGQRGRGQQKRGKGTEHTRPSIRANDKRGK. Over residues 179 to 196 the composition is skewed to basic and acidic residues; sequence KGTEHTRPSIRANDKRGK.

Belongs to the eukaryotic ribosomal protein eL15 family.

The sequence is that of Large ribosomal subunit protein eL15 from Natronomonas pharaonis (strain ATCC 35678 / DSM 2160 / CIP 103997 / JCM 8858 / NBRC 14720 / NCIMB 2260 / Gabara) (Halobacterium pharaonis).